The following is a 123-amino-acid chain: Probable cyclase otaY (123 aa).

The protein belongs to the aurE cyclase family.

Its pathway is mycotoxin biosynthesis. Probable cyclase; part of the gene cluster that mediates the biosynthesis of ochratoxin A (OTA), a mycotoxin composed of a chlorinated type I polyketide dihydroisocoumarin moiety linked to L-phenylalanine, and demonstrated to have nephrotoxic, immunotoxic, genotoxic, neurotoxic, and teratogenic properties. OtaY is probably involved in the polyketide cyclization. The pathway begins with the highly reducing polyketide synthase otaA that catalyzes the formation of the isocoumarin group during the initial stages of biosynthesis, starting from one acetate and 4 malonate units, to originate the characteristic pentaketide skeleton 7-methylmellein (7-MM) of the OTA molecule. The newly identified cyclase otaY might be involved in the polyketide cyclization reaction during the initial steps of the OTA biosynthesis. 7-MM is then oxidized into 7-carboxymellein (also called ochratoxin beta) by the cytochrome P450 monooxygenase otaC. The NRPS encoded by the otaB gene is involved in the linking of phenylalanine to the dihydroisocoumarin ring. The reaction catalyzed by NRPS results in the production of ochratoxin B (OTB), which is the non-chlorinated analog of OTA and which subsequently serves as the substrate of the halogenase otaD for chlorination activity to form the final molecular structure of OTA, containing a chlorine atom in the C-5 position of the molecule. The protein is Probable cyclase otaY of Aspergillus carbonarius (strain ITEM 5010).